A 46-amino-acid chain; its full sequence is Esculentin-1GRa (46 aa).

In terms of tissue distribution, expressed by the skin glands.

Its subcellular location is the secreted. Antimicrobial peptide active against the Gram-positive bacterium S.aureus (MIC=12.5 uM) and against the Gram-negative bacterium E.coli (MIC=6 uM). Has no antifungal activity against C.albicans. Shows hemolytic activity against human erythrocytes only at high concentrations (LC(50)=210 uM). In Odorrana grahami (Yunnanfu frog), this protein is Esculentin-1GRa.